The primary structure comprises 249 residues: 5'-nucleotidase SurE (249 aa).

Residues Asp-8, Asp-9, Ser-39, and Asn-91 each coordinate a divalent metal cation.

The protein belongs to the SurE nucleotidase family. A divalent metal cation serves as cofactor.

It is found in the cytoplasm. It catalyses the reaction a ribonucleoside 5'-phosphate + H2O = a ribonucleoside + phosphate. Nucleotidase that shows phosphatase activity on nucleoside 5'-monophosphates. This chain is 5'-nucleotidase SurE, found in Pseudomonas putida (strain W619).